Reading from the N-terminus, the 183-residue chain is I-kappa-B like protein N2 (183 aa).

2 ANK repeats span residues 62-95 (DGNT…DLNL) and 99-129 (CHKP…NLEA). The segment at 163-183 (PRQDGSSEDEVSDSEEKSDSE) is disordered.

It belongs to the polydnaviridae I-Kappa-B like protein family.

Its function is as follows. Suppresses the host immune response through NF-kappa-B inactivation. Possesses ankyrin repeat domains required for NF-kappa-B binding but lacks the regulatory regions required for dissociation from NF-kappa-B and degradation. Therefore, prevents host NF-kappa-B release and subsequent activation. This Microplitis demolitor (Parasitoid wasp) protein is I-kappa-B like protein N2 (N5).